We begin with the raw amino-acid sequence, 380 residues long: Protein RecA (380 aa).

65–72 (GPESSGKT) provides a ligand contact to ATP. The tract at residues 329 to 380 (DATGEETSETDDQAKEAKDKGTAKNGSKGQSKSTKATPAETALDLGDQPTEK) is disordered. Positions 340-350 (DQAKEAKDKGT) are enriched in basic and acidic residues. Over residues 352-364 (KNGSKGQSKSTKA) the composition is skewed to polar residues.

This sequence belongs to the RecA family.

Its subcellular location is the cytoplasm. In terms of biological role, can catalyze the hydrolysis of ATP in the presence of single-stranded DNA, the ATP-dependent uptake of single-stranded DNA by duplex DNA, and the ATP-dependent hybridization of homologous single-stranded DNAs. It interacts with LexA causing its activation and leading to its autocatalytic cleavage. The chain is Protein RecA from Lactiplantibacillus plantarum (strain ATCC BAA-793 / NCIMB 8826 / WCFS1) (Lactobacillus plantarum).